The sequence spans 81 residues: Trefoil factor 1 (81 aa).

An N-terminal signal peptide occupies residues M1 to G23. One can recognise a P-type domain in the interval E26–V69. Cystine bridges form between C28–C54, C38–C53, and C48–C65.

The protein localises to the secreted. Functionally, stabilizer of the mucous gel overlying the gastrointestinal mucosa that provides a physical barrier against various noxious agents. The sequence is that of Trefoil factor 1 (TFF1) from Canis lupus familiaris (Dog).